We begin with the raw amino-acid sequence, 522 residues long: Lysine--tRNA ligase (522 aa).

The 'HIGH' region signature appears at 44-52; it reads PSGLPHIGT. The 'KMSKS' region motif lies at 290–294; sequence KISKS. Lys293 contributes to the ATP binding site.

Belongs to the class-I aminoacyl-tRNA synthetase family.

The protein resides in the cytoplasm. The enzyme catalyses tRNA(Lys) + L-lysine + ATP = L-lysyl-tRNA(Lys) + AMP + diphosphate. This chain is Lysine--tRNA ligase, found in Rickettsia africae (strain ESF-5).